The sequence spans 351 residues: MENNNSLTIIKKADPKTKSNGEAFQIAFDSMDKIKTMLTQQNDKEKLVLKKLMIEMSINNSLLNELLTSFSTRVNIIDVEIIVLESQISTIERLTLENKKEIQSNDQEKIKEISSMIDKLIDPLLKNIDGLTNKFTEKNVNDEELKKKIDVFFENSKKLFQGIDKAEKSQFLTKFSSLFGVISGFLGIGSVTAIGATEAVGVTSLIAVGATSLSVVAPICAPVLLTFGCLVGAFISFYKQSVARDKKLKTLKSLLSYYMENIELISQVTDETTKLIYHELKEKVLEFKKLEANLKIDFDLSPIKDQFKSITSKQNLIKDKVEEIANYQLDLIQECQKLKKKSLKNKTINKK.

N-linked (GlcNAc...) asparagine glycans are attached at residues Asn-4 and Asn-59. 2 helical membrane-spanning segments follow: residues 175-195 and 215-235; these read FSSLFGVISGFLGIGSVTAIG and VVAPICAPVLLTFGCLVGAFI. Asn-345 is a glycosylation site (N-linked (GlcNAc...) asparagine).

It is found in the membrane. The sequence is that of Transmembrane protein DDB_G0272716 from Dictyostelium discoideum (Social amoeba).